The following is a 277-amino-acid chain: Ribonuclease HII (277 aa).

The region spanning 72 to 260 is the RNase H type-2 domain; the sequence is EYIAGIDEAG…IKEMIEMKKE (189 aa). A divalent metal cation-binding residues include D78, E79, and D170.

Belongs to the RNase HII family. Requires Mn(2+) as cofactor. It depends on Mg(2+) as a cofactor.

The protein localises to the cytoplasm. It carries out the reaction Endonucleolytic cleavage to 5'-phosphomonoester.. In terms of biological role, endonuclease that specifically degrades the RNA of RNA-DNA hybrids. The sequence is that of Ribonuclease HII from Geobacillus sp. (strain WCH70).